Here is a 425-residue protein sequence, read N- to C-terminus: Adenylosuccinate synthetase (425 aa).

GTP contacts are provided by residues 12–18 (GDEGKGK) and 40–42 (GHT). Aspartate 13 (proton acceptor) is an active-site residue. Positions 13 and 40 each coordinate Mg(2+). Residues 13–16 (DEGK), 38–41 (NAGH), threonine 127, arginine 141, glutamine 222, threonine 237, and arginine 301 contribute to the IMP site. Histidine 41 acts as the Proton donor in catalysis. A substrate-binding site is contributed by 297–303 (AVTGRPR). GTP-binding positions include arginine 303, 329 to 331 (KID), and 411 to 413 (SVG).

It belongs to the adenylosuccinate synthetase family. Homodimer. Mg(2+) serves as cofactor.

The protein localises to the cytoplasm. The enzyme catalyses IMP + L-aspartate + GTP = N(6)-(1,2-dicarboxyethyl)-AMP + GDP + phosphate + 2 H(+). Its pathway is purine metabolism; AMP biosynthesis via de novo pathway; AMP from IMP: step 1/2. Functionally, plays an important role in the de novo pathway of purine nucleotide biosynthesis. Catalyzes the first committed step in the biosynthesis of AMP from IMP. This is Adenylosuccinate synthetase from Fusobacterium nucleatum.